A 324-amino-acid polypeptide reads, in one-letter code: ATP synthase mitochondrial F1 complex assembly factor 1 (324 aa).

A mitochondrion-targeting transit peptide spans 1 to 54 (MAAVVSAAGGACPAVLQVAGLYRGLCAVRSRALGLGFVSPAQLRVFPVRRGSGL).

This sequence belongs to the ATP11 family. Interacts with ATP5F1B; involved in the assembly of the F1 component of the mitochondrial ATP synthase (ATPase). Widely expressed but with low level.

The protein resides in the mitochondrion inner membrane. In terms of biological role, has a complex stabilizing activity in the assembly of the mitochondrial F1-F0 complex. This Mus musculus (Mouse) protein is ATP synthase mitochondrial F1 complex assembly factor 1.